The chain runs to 160 residues: MIDVELNDEGQFLSSEQLQLVKDVLNHAAQEVSLSQQSEVSVTFTTEEDIHELNREHRGIDRPTDVLSFALNDETSDFDPTFHEELGLPNLLGDIVISVPHVERQAADYGHSFERELAFLVVHGFLHLLGYDHMNEEEEKQMFTKQEEILQSYGLGRSES.

The Zn(2+) site is built by H123, H127, and H133.

This sequence belongs to the endoribonuclease YbeY family. The cofactor is Zn(2+).

The protein resides in the cytoplasm. Its function is as follows. Single strand-specific metallo-endoribonuclease involved in late-stage 70S ribosome quality control and in maturation of the 3' terminus of the 16S rRNA. The chain is Endoribonuclease YbeY from Shouchella clausii (strain KSM-K16) (Alkalihalobacillus clausii).